The sequence spans 89 residues: Small ribosomal subunit protein uS15 (89 aa).

The protein belongs to the universal ribosomal protein uS15 family. As to quaternary structure, part of the 30S ribosomal subunit. Forms a bridge to the 50S subunit in the 70S ribosome, contacting the 23S rRNA.

Its function is as follows. One of the primary rRNA binding proteins, it binds directly to 16S rRNA where it helps nucleate assembly of the platform of the 30S subunit by binding and bridging several RNA helices of the 16S rRNA. In terms of biological role, forms an intersubunit bridge (bridge B4) with the 23S rRNA of the 50S subunit in the ribosome. The protein is Small ribosomal subunit protein uS15 of Chlorobaculum parvum (strain DSM 263 / NCIMB 8327) (Chlorobium vibrioforme subsp. thiosulfatophilum).